Reading from the N-terminus, the 455-residue chain is Argininosuccinate lyase (455 aa).

The protein belongs to the lyase 1 family. Argininosuccinate lyase subfamily.

It is found in the cytoplasm. It catalyses the reaction 2-(N(omega)-L-arginino)succinate = fumarate + L-arginine. It participates in amino-acid biosynthesis; L-arginine biosynthesis; L-arginine from L-ornithine and carbamoyl phosphate: step 3/3. This is Argininosuccinate lyase from Shewanella baltica (strain OS185).